A 211-amino-acid chain; its full sequence is Large ribosomal subunit protein uL3 (211 aa).

The segment at 134–155 (ATHGNSLSHRAPGSIGQNQTPG) is disordered. Glutamine 152 bears the N5-methylglutamine mark.

This sequence belongs to the universal ribosomal protein uL3 family. As to quaternary structure, part of the 50S ribosomal subunit. Forms a cluster with proteins L14 and L19. Post-translationally, methylated by PrmB.

One of the primary rRNA binding proteins, it binds directly near the 3'-end of the 23S rRNA, where it nucleates assembly of the 50S subunit. This chain is Large ribosomal subunit protein uL3, found in Methylococcus capsulatus (strain ATCC 33009 / NCIMB 11132 / Bath).